The chain runs to 107 residues: Wound-induced proteinase inhibitor 1 (107 aa).

The N-terminal stretch at 1 to 23 (MESKFAHIIVFFLLATSFETLLA) is a signal peptide. Positions 24 to 36 (RKESDGPEVIELQ) are excised as a propeptide.

The protein belongs to the protease inhibitor I13 (potato type I serine protease inhibitor) family. In terms of assembly, heterogeneous tetramers of similar chains.

Inhibits both chymotrypsin and trypsin. The chain is Wound-induced proteinase inhibitor 1 from Solanum tuberosum (Potato).